A 166-amino-acid chain; its full sequence is Ribosome maturation factor RimM (166 aa).

The PRC barrel domain maps to 94-166 (EGEYYLGKLI…IELKVLDLLK (73 aa)).

Belongs to the RimM family. Binds ribosomal protein uS19.

The protein resides in the cytoplasm. An accessory protein needed during the final step in the assembly of 30S ribosomal subunit, possibly for assembly of the head region. Essential for efficient processing of 16S rRNA. May be needed both before and after RbfA during the maturation of 16S rRNA. It has affinity for free ribosomal 30S subunits but not for 70S ribosomes. This Borreliella burgdorferi (strain ATCC 35210 / DSM 4680 / CIP 102532 / B31) (Borrelia burgdorferi) protein is Ribosome maturation factor RimM.